The following is a 325-amino-acid chain: 2-dehydro-3-deoxygluconokinase (325 aa).

Substrate is bound by residues 49–53, Tyr-105, 121–123, and Arg-181; these read GSEAN and YYR. ATP contacts are provided by residues 179-181, 240-245, and 269-272; these read NIR, KLGAEG, and GAGD. The substrate site is built by Asp-272 and Asp-308. The Proton acceptor role is filled by Asp-272.

It belongs to the carbohydrate kinase PfkB family. As to quaternary structure, homohexamer; trimer of dimers.

The catalysed reaction is 2-dehydro-3-deoxy-D-gluconate + ATP = 2-dehydro-3-deoxy-6-phospho-D-gluconate + ADP + H(+). Its pathway is carbohydrate acid metabolism; 2-dehydro-3-deoxy-D-gluconate degradation; D-glyceraldehyde 3-phosphate and pyruvate from 2-dehydro-3-deoxy-D-gluconate: step 1/2. In terms of biological role, involved in the degradation of glucose via the semi-phosphorylative Entner-Doudoroff pathway. Catalyzes the phosphorylation of 2-keto-3-deoxygluconate (KDG) yielding 2-keto-3-deoxy-6-phosphogluconate (KDPG). The sequence is that of 2-dehydro-3-deoxygluconokinase (kdgK) from Thermoproteus tenax.